The sequence spans 153 residues: Cytochrome c-type biogenesis protein CcmE (153 aa).

The Cytoplasmic portion of the chain corresponds to 1 to 8; it reads MTPVQRRR. Residues 9 to 29 form a helical; Signal-anchor for type II membrane protein membrane-spanning segment; that stretch reads LAWVLLALLASGLATALVAMA. Residues 30 to 153 lie on the Extracellular side of the membrane; sequence LERNIAYLYT…DVPVTAPEVR (124 aa). Residues H123 and Y127 each contribute to the heme site.

It belongs to the CcmE/CycJ family.

It is found in the cell membrane. Its function is as follows. Heme chaperone required for the biogenesis of c-type cytochromes. Transiently binds heme delivered by CcmC and transfers the heme to apo-cytochromes in a process facilitated by CcmF and CcmH. This is Cytochrome c-type biogenesis protein CcmE from Stenotrophomonas maltophilia (strain K279a).